Here is a 515-residue protein sequence, read N- to C-terminus: Aldehyde dehydrogenase tropH (515 aa).

An NAD(+)-binding site is contributed by Gly-238–Gly-243. The active-site Proton acceptor is the Glu-260. Cys-295 serves as the catalytic Nucleophile.

The protein belongs to the aldehyde dehydrogenase family.

It catalyses the reaction an aldehyde + NAD(+) + H2O = a carboxylate + NADH + 2 H(+). Its pathway is secondary metabolite biosynthesis. Its function is as follows. Aldehyde dehydrogenase; part of the gene cluster that mediates the biosynthesis of the tropolone class of fungal maleic anhydrides. The pathway begins with the synthesis of 3-methylorcinaldehyde by the non-reducing polyketide synthase (PKS) tropA. 3-methylorcinaldehyde is the substrate for the FAD-dependent monooxygenase tropB to yield a dearomatized hydroxycyclohexadione. The 2-oxoglutarate-dependent dioxygenase tropC then performs the oxidative ring expansion to provide the first tropolone metabolite stipitaldehyde. Trop D converts stipitaldehyde into stipitacetal which is in turn converted to stipitalide by the short-chain dehydrogenase/reductase tropE. The next steps involve tropF, tropG, tropH, tropI and tropJ to form successive tropolone maleic anhydrides including stipitaldehydic, stipitatonic and stipitatic acids. In Talaromyces stipitatus (strain ATCC 10500 / CBS 375.48 / QM 6759 / NRRL 1006) (Penicillium stipitatum), this protein is Aldehyde dehydrogenase tropH.